Here is a 487-residue protein sequence, read N- to C-terminus: N-succinylglutamate 5-semialdehyde dehydrogenase (487 aa).

An NAD(+)-binding site is contributed by 221–226; that stretch reads GSSDTG. Catalysis depends on residues Glu-244 and Cys-278.

Belongs to the aldehyde dehydrogenase family. AstD subfamily.

It carries out the reaction N-succinyl-L-glutamate 5-semialdehyde + NAD(+) + H2O = N-succinyl-L-glutamate + NADH + 2 H(+). It functions in the pathway amino-acid degradation; L-arginine degradation via AST pathway; L-glutamate and succinate from L-arginine: step 4/5. In terms of biological role, catalyzes the NAD-dependent reduction of succinylglutamate semialdehyde into succinylglutamate. The sequence is that of N-succinylglutamate 5-semialdehyde dehydrogenase from Burkholderia pseudomallei (strain 1106a).